The following is a 447-amino-acid chain: Cysteine--tRNA ligase (447 aa).

Cys-28 serves as a coordination point for Zn(2+). Positions 30–40 (PTVYNYIHIGN) match the 'HIGH' region motif. Residues Cys-211, His-236, and Glu-240 each contribute to the Zn(2+) site. A 'KMSKS' region motif is present at residues 268–272 (KMSKS). Lys-271 serves as a coordination point for ATP.

Belongs to the class-I aminoacyl-tRNA synthetase family. Monomer. The cofactor is Zn(2+).

It is found in the cytoplasm. The enzyme catalyses tRNA(Cys) + L-cysteine + ATP = L-cysteinyl-tRNA(Cys) + AMP + diphosphate. This chain is Cysteine--tRNA ligase, found in Streptococcus pyogenes serotype M6 (strain ATCC BAA-946 / MGAS10394).